A 209-amino-acid polypeptide reads, in one-letter code: Thymidylate kinase (209 aa).

10–17 (GLDGAGKS) provides a ligand contact to ATP.

It belongs to the thymidylate kinase family.

It catalyses the reaction dTMP + ATP = dTDP + ADP. Functionally, phosphorylation of dTMP to form dTDP in both de novo and salvage pathways of dTTP synthesis. This is Thymidylate kinase from Francisella tularensis subsp. tularensis (strain FSC 198).